We begin with the raw amino-acid sequence, 259 residues long: Indole-diterpene biosynthesis cluster protein S (259 aa).

5 helical membrane passes run 5–25, 64–84, 87–107, 134–154, and 221–241; these read EASGWGFSLLQILLVLAGMVW, WFALHLFLYTTQLVGLSAIIL, VYLIRMLGLSTALPLISLWVL, VLWFTGLAHVASFLVATAASF, and LGAGLLARLFFVSLIAGPAAG.

The protein belongs to the ltmS family.

The protein localises to the membrane. Functionally, part of the gene cluster that mediates the biosynthesis of paspalitrems, indole-diterpene (IDT) mycotoxins that are potent tremorgens in mammals. The geranylgeranyl diphosphate (GGPP) synthase idtG is proposed to catalyze the first step in IDT biosynthesis via catalysis of a series of iterative condensations of isopentenyl diphosphate (IPP) with dimethylallyl diphosphate (DMAPP), geranyl diphosphate (GPP), and farnesyl diphosphate (FPP), to form GGPP. Condensation of indole-3-glycerol phosphate with GGPP by the prenyltransferase idtC then forms 3-geranylgeranylindole (3-GGI). Epoxidation of the two terminal alkenes of the geranylgeranyl moiety by the FAD-dependent monooxygenase idtM, and cyclization by the terpene cyclase idtB then leads to the production of paspaline. The cytochrome P450 monooxygenase idtP then catalyzes oxidative elimination of the pendant methyl group at C-12 of paspaline and generates the C-10 ketone to yield 13-desoxypaxilline. The cytochrome P450 monooxygenase idtQ may catalyze the C-13 oxidation of 13-desoxypaxilline to afford paxilline. Considering that both paspalicine and paxilline were detected in C.paspali, idtQ also catalyzes the formation of paspalinine from 13-desoxypaxilline via paspalicine as an intermediate. Finally, the alpha-prenyltransferase idtF prenylates paspalinine at the C-20 or the C-21 positions to yield paspalitrems A and C, respectively. The hydroxylation of paspalitrem A at C-32 by a still unknown oxidase affords paspalitrem B. The chain is Indole-diterpene biosynthesis cluster protein S from Claviceps paspali (Rye ergot fungus).